A 332-amino-acid chain; its full sequence is Glycerol-3-phosphate dehydrogenase [NAD(P)+] (332 aa).

Residues S11, F12, K32, and K106 each contribute to the NADPH site. Sn-glycerol 3-phosphate-binding residues include K106, G137, and S139. A141 lines the NADPH pocket. Positions 192, 245, 255, 256, and 257 each coordinate sn-glycerol 3-phosphate. Catalysis depends on K192, which acts as the Proton acceptor. NADPH is bound at residue R256. NADPH-binding residues include V280 and E282.

It belongs to the NAD-dependent glycerol-3-phosphate dehydrogenase family.

The protein resides in the cytoplasm. It catalyses the reaction sn-glycerol 3-phosphate + NAD(+) = dihydroxyacetone phosphate + NADH + H(+). The enzyme catalyses sn-glycerol 3-phosphate + NADP(+) = dihydroxyacetone phosphate + NADPH + H(+). Its pathway is membrane lipid metabolism; glycerophospholipid metabolism. In terms of biological role, catalyzes the reduction of the glycolytic intermediate dihydroxyacetone phosphate (DHAP) to sn-glycerol 3-phosphate (G3P), the key precursor for phospholipid synthesis. The chain is Glycerol-3-phosphate dehydrogenase [NAD(P)+] from Staphylococcus haemolyticus (strain JCSC1435).